Consider the following 148-residue polypeptide: Snaclec B3/B5 (148 aa).

A signal peptide spans 1–24 (MGRFIFVSFGLLVVFLSLSGTGAA). 3 disulfides stabilise this stretch: C27–C38, C55–C144, and C121–C136. One can recognise a C-type lectin domain in the interval 34–145 (YDQHCYKVFD…CRLLGHFVCK (112 aa)).

It belongs to the snaclec family. As to quaternary structure, heterodimer; disulfide-linked. Expressed by the venom gland.

It is found in the secreted. Its function is as follows. Interferes with one step of hemostasis (modulation of platelet aggregation, or coagulation cascade, for example). This Macrovipera lebetinus (Levantine viper) protein is Snaclec B3/B5.